Reading from the N-terminus, the 33-residue chain is U23-ctenitoxin-Pn1a (33 aa).

3 disulfide bridges follow: Cys-3–Cys-16, Cys-10–Cys-21, and Cys-15–Cys-30.

As to expression, expressed by the venom gland.

Its subcellular location is the secreted. Non-toxic to mice. This chain is U23-ctenitoxin-Pn1a, found in Phoneutria nigriventer (Brazilian armed spider).